Here is a 116-residue protein sequence, read N- to C-terminus: Classical arabinogalactan protein 25 (116 aa).

Residues 1 to 28 (MAFSFLNKLLIIFIFIFISLSSSSPTIS) form the signal peptide. The disordered stretch occupies residues 40-95 (LLPSPGDALPSDDGSGTIPSSPSPPDPDTNDGSYPDPLAFSPFASPPVSSPSPPPS). Composition is skewed to low complexity over residues 50–59 (SDDGSGTIPS) and 69–82 (NDGS…FSPF). Residues 83–95 (ASPPVSSPSPPPS) are compositionally biased toward pro residues. A lipid anchor (GPI-anchor amidated serine) is attached at Ser89. The propeptide at 90–116 (PSPPPSLPSAGVLLISLIISSASFLAL) is removed in mature form.

It belongs to the classical AGP family. Post-translationally, O-glycosylated on the hydroxyproline residues.

Its subcellular location is the cell membrane. Functionally, proteoglycan that seems to be implicated in diverse developmental roles such as differentiation, cell-cell recognition, embryogenesis and programmed cell death. This Arabidopsis thaliana (Mouse-ear cress) protein is Classical arabinogalactan protein 25 (AGP25).